A 281-amino-acid chain; its full sequence is Elongation factor Ts (281 aa).

Positions 79-82 (TDFV) are involved in Mg(2+) ion dislocation from EF-Tu.

Belongs to the EF-Ts family.

Its subcellular location is the cytoplasm. Its function is as follows. Associates with the EF-Tu.GDP complex and induces the exchange of GDP to GTP. It remains bound to the aminoacyl-tRNA.EF-Tu.GTP complex up to the GTP hydrolysis stage on the ribosome. This Wolbachia pipientis subsp. Culex pipiens (strain wPip) protein is Elongation factor Ts.